A 411-amino-acid chain; its full sequence is NADH-quinone oxidoreductase subunit D 2 (411 aa).

Belongs to the complex I 49 kDa subunit family. NDH-1 is composed of 14 different subunits. Subunits NuoB, C, D, E, F, and G constitute the peripheral sector of the complex.

The protein localises to the cell membrane. It carries out the reaction a quinone + NADH + 5 H(+)(in) = a quinol + NAD(+) + 4 H(+)(out). Its function is as follows. NDH-1 shuttles electrons from NADH, via FMN and iron-sulfur (Fe-S) centers, to quinones in the respiratory chain. The immediate electron acceptor for the enzyme in this species is believed to be ubiquinone. Couples the redox reaction to proton translocation (for every two electrons transferred, four hydrogen ions are translocated across the cytoplasmic membrane), and thus conserves the redox energy in a proton gradient. The chain is NADH-quinone oxidoreductase subunit D 2 from Chloroflexus aurantiacus (strain ATCC 29366 / DSM 635 / J-10-fl).